Consider the following 192-residue polypeptide: MLGLRLIVGLGNPGSEHTKTRHNAGFRFVDGLVQREGQRWMLESKLFAHVARVFIAGQWVWLLRPVTFMNLSGKSICAGLSFWKIKPEQMLVAHDELDFPPGAVRLKFDGGHGGQNGLRDITKLLGHGRFHRLRVGIGHPGHKDRVVNWVLGCPTCEENIAIDAALERASAVLPLVVAGDFDEAMKKLHTVV.

Position 17 (histidine 17) interacts with tRNA. Histidine 22 (proton acceptor) is an active-site residue. Positions 68, 70, and 116 each coordinate tRNA.

Belongs to the PTH family. Monomer.

The protein localises to the cytoplasm. It carries out the reaction an N-acyl-L-alpha-aminoacyl-tRNA + H2O = an N-acyl-L-amino acid + a tRNA + H(+). Hydrolyzes ribosome-free peptidyl-tRNAs (with 1 or more amino acids incorporated), which drop off the ribosome during protein synthesis, or as a result of ribosome stalling. Its function is as follows. Catalyzes the release of premature peptidyl moieties from peptidyl-tRNA molecules trapped in stalled 50S ribosomal subunits, and thus maintains levels of free tRNAs and 50S ribosomes. This chain is Peptidyl-tRNA hydrolase, found in Xylella fastidiosa (strain 9a5c).